The primary structure comprises 295 residues: Tissue factor (295 aa).

A signal peptide spans 1–28 (MAIPMRPRLLAALAPTFLGFLLLQVAVG). Over 29–252 (AGTPPGKAFN…TEQWKSVLGE (224 aa)) the chain is Extracellular. 2 N-linked (GlcNAc...) asparagine glycosylation sites follow: Asn38 and Asn58. A disulfide bridge connects residues Cys76 and Cys84. Asn95, Asn109, Asn170, and Asn201 each carry an N-linked (GlcNAc...) asparagine glycan. Cys219 and Cys242 are disulfide-bonded. The WKS motif signature appears at 246–248 (WKS). Residues 253-275 (TLIIVGAVVFLVTVFIILLTISL) traverse the membrane as a helical segment. Cys276 is lipidated: S-palmitoyl cysteine. The Cytoplasmic portion of the chain corresponds to 276–295 (CKRRKNRAGQKRKNTPSRLA).

It belongs to the tissue factor family. As to quaternary structure, interacts with HSPE; the interaction, inhibited by heparin, promotes the generation of activated factor X and activates coagulation in the presence of activated factor VII.

Its subcellular location is the membrane. Its function is as follows. Initiates blood coagulation by forming a complex with circulating factor VII or VIIa. The [TF:VIIa] complex activates factors IX or X by specific limited proteolysis. TF plays a role in normal hemostasis by initiating the cell-surface assembly and propagation of the coagulation protease cascade. This chain is Tissue factor (F3), found in Rattus norvegicus (Rat).